We begin with the raw amino-acid sequence, 341 residues long: MRKDLIELDGSEGGGQILRSALSLSMTSGQPLRIRNIRGRRSRPGLLRQHLTAVRAAAEICAAEVEGAELGSRELAFRPGAIRAGDYAFAIGSAGSCSLVLQTLLPALLAANGESRVRISGGTHNPLAPPADFLRDSWLPLLQRMGAEVDLELLRHGFVPAGGGELLARVRPARWRPLQLEHPGAALRRQARALLAGIPGHVGERELERVRQRLGWSDEERQLEFLAEVQGPGNALLLRIDCEHICATFCAFGQAGVSAERVAEQVATQAIGWMESGCAADEHLADQLLLPMALAGAGSFTTPRLSAHLQSNRRVIERFLPVRIGDQALDGGGHRIVITSA.

Residues Gln-102 and 283-287 (HLADQ) each bind ATP. His-308 (tele-AMP-histidine intermediate) is an active-site residue.

It belongs to the RNA 3'-terminal cyclase family. Type 1 subfamily.

The protein localises to the cytoplasm. It catalyses the reaction a 3'-end 3'-phospho-ribonucleotide-RNA + ATP = a 3'-end 2',3'-cyclophospho-ribonucleotide-RNA + AMP + diphosphate. Catalyzes the conversion of 3'-phosphate to a 2',3'-cyclic phosphodiester at the end of RNA. The mechanism of action of the enzyme occurs in 3 steps: (A) adenylation of the enzyme by ATP; (B) transfer of adenylate to an RNA-N3'P to produce RNA-N3'PP5'A; (C) and attack of the adjacent 2'-hydroxyl on the 3'-phosphorus in the diester linkage to produce the cyclic end product. The biological role of this enzyme is unknown but it is likely to function in some aspects of cellular RNA processing. The chain is RNA 3'-terminal phosphate cyclase from Pseudomonas aeruginosa (strain LESB58).